The following is a 239-amino-acid chain: MVIKAQSPAGFAEEYIIESIWNNRFPPGSILPAERELSELIGVTRTTLREVLQRLARDGWLTIQHGKPTKINNFWETSGLNILETLARLDHDSVPQLIDNLLAVRTNIAAIFIRTALRHNPEKVRDVLTQANAVDDSAEAFAQLDYNVFRGLAFASGNPIYGLILNGLKGLYIRVGRYYFSNPEARKLAVNFYGRLEALRSEELYDQVMDVVRHYGKESGAIWHSMQSAIPRDIAEVRR.

The 69-residue stretch at 6–74 (QSPAGFAEEY…HGKPTKINNF (69 aa)) folds into the HTH gntR-type domain. Positions 34–53 (ERELSELIGVTRTTLREVLQ) form a DNA-binding region, H-T-H motif.

As to quaternary structure, homodimer.

The protein resides in the cytoplasm. Its function is as follows. Multifunctional regulator of fatty acid metabolism. This is Fatty acid metabolism regulator protein from Pectobacterium carotovorum subsp. carotovorum (strain PC1).